The chain runs to 442 residues: MTAAVQSPVLPLLEKENVADIAIPEGDSTYWWRTSGQDLSRMLQEAGYPDEAKRQFLNYFRDTICPTLGGKPDSNALRTAVGWDGSPFEYSFEFKESTKSAGVRFVVDLTQLRPGDKSAPLTTKTTENVIESLSKKTPLFDDNWHRALSQWFVYSHAPESEQKALVAAAGYQTNIIMGFDINAKILDLAPGYLPIMAKSYFPPCFVAEAKGFTRWQALSLGIRQIPDIGSHPNILLALKLIEDYVAAKPELAGGARGLSTDFVKAGKARLKIYMRYLGDDFEEVWDYYTLGGKIPDLESDKEMFRDLMTLSSPSTYTEEDWKDTQVDPRRRAAFKTKPTAVYFSLSPDKPYPIPKVYFYPARAAPNDKVIARGLDAWLTKYNWHDGGKSVEERVESVFTHRKLEENPGIFTFIGLGRKEDSTKKGLSLQVYMTPELYVTPRF.

This sequence belongs to the tryptophan dimethylallyltransferase family.

It functions in the pathway secondary metabolite biosynthesis; terpenoid biosynthesis. Functionally, prenyltransferase; part of the gene cluster that mediates the biosynthesis of the phthalide-terpenoid hybrid 11'-O-desmethylfendlerol. Within the pathway, mfmD is responsible for farnesylation of the cyclopolic acid intermediate via an O-prenylation reaction. The biosynthesis of 11'-O-desmethylfendlerol begins with the NR-PKS mfmB that forms 3,5-dimethylorsellinic acid (DMOA), which is then transformed into the phthalide 5,7-dihydroxy-4-(hydroxymethyl)-6-methylphthalide by the cytochrome P450 monooxygenase mfmA and the hydrolase mfmC. Subsequently, the methyltransferase mfmE catalyzes 7-O-methylation to yield 5-hydroxy-4-(hydroxymethyl)-7-methoxy-6-methylphthalide, which undergoes C-3 hydroxylation by the cytochrome P450 monooxygenase mfmF. The resultant cyclopolic acid (2,5-dihydroxy-4-(hydroxymethyl)-7-methoxy-6-methylphthalide) is then farnesylated by the DMATS-type prenyltransferase mfmD to afford 5-O-farnesylcyclopolic acid. Finally, the Pyr4-family terpene cyclase mfmH cyclizes the farnesyl moiety of 5-O-farnesylcyclopolic acid into a drimane-like structure, thus completing the biosynthesis of 11'-O-desmethylfendlerol. This Annulohypoxylon moriforme (Filamentous fungus) protein is DMATS-type prenyltransferase mfmD.